Here is a 715-residue protein sequence, read N- to C-terminus: Fatty acid oxidation complex subunit alpha (715 aa).

An enoyl-CoA hydratase/isomerase region spans residues 1 to 189; that stretch reads MIYQGETLSV…KVGAIDAVVA (189 aa). D296 is a binding site for substrate. Residues 311-715 are 3-hydroxyacyl-CoA dehydrogenase; it reads AKATRHAAVL…EMAAQGKTFY (405 aa). NAD(+)-binding positions include M325, D344, 401-403, K408, and S430; that span reads VVE. Catalysis depends on H451, which acts as the For 3-hydroxyacyl-CoA dehydrogenase activity. N454 serves as a coordination point for NAD(+). Residues N501 and Y661 each contribute to the substrate site.

This sequence in the N-terminal section; belongs to the enoyl-CoA hydratase/isomerase family. The protein in the C-terminal section; belongs to the 3-hydroxyacyl-CoA dehydrogenase family. In terms of assembly, heterotetramer of two alpha chains (FadB) and two beta chains (FadA).

The enzyme catalyses a (3S)-3-hydroxyacyl-CoA + NAD(+) = a 3-oxoacyl-CoA + NADH + H(+). It catalyses the reaction a (3S)-3-hydroxyacyl-CoA = a (2E)-enoyl-CoA + H2O. The catalysed reaction is a 4-saturated-(3S)-3-hydroxyacyl-CoA = a (3E)-enoyl-CoA + H2O. It carries out the reaction (3S)-3-hydroxybutanoyl-CoA = (3R)-3-hydroxybutanoyl-CoA. The enzyme catalyses a (3Z)-enoyl-CoA = a 4-saturated (2E)-enoyl-CoA. It catalyses the reaction a (3E)-enoyl-CoA = a 4-saturated (2E)-enoyl-CoA. The protein operates within lipid metabolism; fatty acid beta-oxidation. In terms of biological role, involved in the aerobic and anaerobic degradation of long-chain fatty acids via beta-oxidation cycle. Catalyzes the formation of 3-oxoacyl-CoA from enoyl-CoA via L-3-hydroxyacyl-CoA. It can also use D-3-hydroxyacyl-CoA and cis-3-enoyl-CoA as substrate. This is Fatty acid oxidation complex subunit alpha from Aeromonas salmonicida (strain A449).